The primary structure comprises 447 residues: Phosphoglucosamine mutase (447 aa).

Serine 100 serves as the catalytic Phosphoserine intermediate. The Mg(2+) site is built by serine 100, aspartate 239, aspartate 241, and aspartate 243. Phosphoserine is present on serine 100.

It belongs to the phosphohexose mutase family. Mg(2+) is required as a cofactor. In terms of processing, activated by phosphorylation.

It carries out the reaction alpha-D-glucosamine 1-phosphate = D-glucosamine 6-phosphate. Its function is as follows. Catalyzes the conversion of glucosamine-6-phosphate to glucosamine-1-phosphate. The polypeptide is Phosphoglucosamine mutase (Dictyoglomus turgidum (strain DSM 6724 / Z-1310)).